Here is a 129-residue protein sequence, read N- to C-terminus: uncharacterized protein (129 aa).

Helical transmembrane passes span 49–69 (LWSL…IVGV), 72–92 (FTIF…NLIF), and 101–118 (YFNC…NLLQ).

The protein localises to the membrane. This is an uncharacterized protein from Saccharomyces cerevisiae (strain ATCC 204508 / S288c) (Baker's yeast).